The primary structure comprises 158 residues: Protein Smg homolog (158 aa).

This sequence belongs to the Smg family.

This chain is Protein Smg homolog, found in Shewanella sp. (strain ANA-3).